We begin with the raw amino-acid sequence, 962 residues long: Alpha-glucan phosphorylase 1 (962 aa).

Residues 1–63 (MDTMRISGVS…RSFLSVKSIS (63 aa)) constitute a chloroplast transit peptide. Positions 525–552 (AKDAQNGVKTEQEEEKTAGEEEEDEVIP) are disordered. An N6-(pyridoxal phosphate)lysine modification is found at Lys-808.

Belongs to the glycogen phosphorylase family. The cofactor is pyridoxal 5'-phosphate.

The protein resides in the plastid. It is found in the chloroplast stroma. The catalysed reaction is [(1-&gt;4)-alpha-D-glucosyl](n) + phosphate = [(1-&gt;4)-alpha-D-glucosyl](n-1) + alpha-D-glucose 1-phosphate. Functionally, phosphorylase is an important allosteric enzyme in carbohydrate metabolism. Enzymes from different sources differ in their regulatory mechanisms and in their natural substrates. However, all known phosphorylases share catalytic and structural properties. May be not required for the degradation of starch, but the phosphorolysis of starch may play an important role in water stress tolerance. This chain is Alpha-glucan phosphorylase 1 (PHS1), found in Arabidopsis thaliana (Mouse-ear cress).